Reading from the N-terminus, the 328-residue chain is Phosphate acyltransferase (328 aa).

This sequence belongs to the PlsX family. As to quaternary structure, homodimer. Probably interacts with PlsY.

The protein localises to the cytoplasm. The enzyme catalyses a fatty acyl-[ACP] + phosphate = an acyl phosphate + holo-[ACP]. The protein operates within lipid metabolism; phospholipid metabolism. Functionally, catalyzes the reversible formation of acyl-phosphate (acyl-PO(4)) from acyl-[acyl-carrier-protein] (acyl-ACP). This enzyme utilizes acyl-ACP as fatty acyl donor, but not acyl-CoA. The protein is Phosphate acyltransferase of Campylobacter jejuni subsp. jejuni serotype O:23/36 (strain 81-176).